Consider the following 596-residue polypeptide: uncharacterized protein (596 aa).

2 stretches are compositionally biased toward basic residues: residues 1–10 (MRLRSQKRGN) and 18–29 (KTRKGKGKKLKP). The interval 1–30 (MRLRSQKRGNKFVALPAKTRKGKGKKLKPK) is disordered.

This is an uncharacterized protein from Magallana gigas (Pacific oyster).